We begin with the raw amino-acid sequence, 381 residues long: Peptidoglycan transport system permease protein YejE (381 aa).

5 helical membrane-spanning segments follow: residues 38–58 (YWSFWLFLILFFLSLIAEFIA), 183–203 (VLFGLTLTIASALVGVTAGAI), 230–250 (ILLIIAAILPPGFFVLLGIML), 292–312 (LLPNAMVATLTFLPFILSGSI), and 347–367 (WLGLTAFFTMSIMLSLLIFVG). One can recognise an ABC transmembrane type-1 domain in the interval 179–371 (FRISVLFGLT…LLIFVGEAVR (193 aa)).

It belongs to the binding-protein-dependent transport system permease family. The complex is composed of one ATP-binding protein (YejF), two transmembrane proteins (YejB and YejE) and a solute-binding protein (YepA or YejA).

The protein resides in the cell inner membrane. In terms of biological role, part of the ABC transporter complex YejBEF-YepA involved in the uptake of muropeptides, the breakdown products of cell wall peptidoglycan. The import of muropeptides into the cell enables peptidoglycan recycling, which is vital for cell wall integrity in this bacterium. Is also probably part of the ABC transporter complex YejABEF, which is likely involved in broad-spectrum peptide import. Responsible for the translocation of the substrate across the membrane. In Agrobacterium fabrum (strain C58 / ATCC 33970) (Agrobacterium tumefaciens (strain C58)), this protein is Peptidoglycan transport system permease protein YejE.